We begin with the raw amino-acid sequence, 752 residues long: Cation-transporting P-type ATPase B (752 aa).

In terms of domain architecture, HMA spans 15-78 (RRIRLDVSGM…VVEKAGYHAA (64 aa)). 2 residues coordinate a metal cation: Cys26 and Cys29. 6 consecutive transmembrane segments (helical) span residues 105 to 125 (LLVA…FAIV), 132 to 152 (GWGY…AWPF), 167 to 187 (METL…SSVF), 201 to 221 (AILN…VFVL), 361 to 381 (IAGV…AAWL), and 390 to 410 (AFSV…GLAT). The active-site 4-aspartylphosphate intermediate is Asp446. Residues 714–734 (AIPIAAAGLLNPLIAGAAMAF) traverse the membrane as a helical segment.

The protein belongs to the cation transport ATPase (P-type) (TC 3.A.3) family. Type IB subfamily.

It localises to the cell membrane. The catalysed reaction is ATP + H2O = ADP + phosphate + H(+). In Mycobacterium bovis (strain ATCC BAA-935 / AF2122/97), this protein is Cation-transporting P-type ATPase B (ctpB).